The sequence spans 131 residues: Small ribosomal subunit protein eS24 (131 aa).

Met-1 is subject to N-acetylmethionine. A Phosphothreonine modification is found at Thr-9. A Glycyl lysine isopeptide (Lys-Gly) (interchain with G-Cter in SUMO2) cross-link involves residue Lys-37. The span at 90–100 (RLARHGLYEKK) shows a compositional bias: basic and acidic residues. A disordered region spans residues 90–131 (RLARHGLYEKKKTSRKQRKERKNRMKKVRGTAKANVGAGKKK). A compositionally biased stretch (basic residues) spans 101–119 (KTSRKQRKERKNRMKKVRG).

Belongs to the eukaryotic ribosomal protein eS24 family. As to quaternary structure, component of the small ribosomal subunit. Part of the small subunit (SSU) processome, composed of more than 70 proteins and the RNA chaperone small nucleolar RNA (snoRNA) U3.

The protein resides in the cytoplasm. It localises to the nucleus. It is found in the nucleolus. Its function is as follows. Component of the small ribosomal subunit. The ribosome is a large ribonucleoprotein complex responsible for the synthesis of proteins in the cell. Required for processing of pre-rRNA and maturation of 40S ribosomal subunits. Part of the small subunit (SSU) processome, first precursor of the small eukaryotic ribosomal subunit. During the assembly of the SSU processome in the nucleolus, many ribosome biogenesis factors, an RNA chaperone and ribosomal proteins associate with the nascent pre-rRNA and work in concert to generate RNA folding, modifications, rearrangements and cleavage as well as targeted degradation of pre-ribosomal RNA by the RNA exosome. The polypeptide is Small ribosomal subunit protein eS24 (RPS24) (Macaca fascicularis (Crab-eating macaque)).